The chain runs to 267 residues: L-aspartate dehydrogenase (267 aa).

NAD(+) contacts are provided by alanine 124 and asparagine 190. Residue histidine 220 is part of the active site.

This sequence belongs to the L-aspartate dehydrogenase family.

The enzyme catalyses L-aspartate + NADP(+) + H2O = oxaloacetate + NH4(+) + NADPH + H(+). It catalyses the reaction L-aspartate + NAD(+) + H2O = oxaloacetate + NH4(+) + NADH + H(+). Its pathway is cofactor biosynthesis; NAD(+) biosynthesis; iminoaspartate from L-aspartate (dehydrogenase route): step 1/1. In terms of biological role, specifically catalyzes the NAD or NADP-dependent dehydrogenation of L-aspartate to iminoaspartate. The sequence is that of L-aspartate dehydrogenase from Ralstonia pickettii (strain 12J).